We begin with the raw amino-acid sequence, 141 residues long: MAKQVEKLVKLQIPAGKATPAPPVGPALGQAGVNIMGFTKEFNARTADQAGMIIPVVISVYDDKSFTFITKTPPAAVLLKKAAGVQKGSGEPNKTKVASVTKAQIKEIAELKMPDLNAASVETAMSMIEGTAKSMGFTVTD.

The protein belongs to the universal ribosomal protein uL11 family. Part of the ribosomal stalk of the 50S ribosomal subunit. Interacts with L10 and the large rRNA to form the base of the stalk. L10 forms an elongated spine to which L12 dimers bind in a sequential fashion forming a multimeric L10(L12)X complex. Post-translationally, one or more lysine residues are methylated.

Its function is as follows. Forms part of the ribosomal stalk which helps the ribosome interact with GTP-bound translation factors. The sequence is that of Large ribosomal subunit protein uL11 from Lactococcus lactis subsp. cremoris (strain MG1363).